Reading from the N-terminus, the 285-residue chain is NADPH-dependent 7-cyano-7-deazaguanine reductase (285 aa).

Residue 91–93 participates in substrate binding; the sequence is IES. Position 93–94 (93–94) interacts with NADPH; it reads SK. Residue cysteine 191 is the Thioimide intermediate of the active site. The active-site Proton donor is aspartate 198. 230–231 provides a ligand contact to substrate; that stretch reads HE. NADPH is bound at residue 259-260; the sequence is RG.

This sequence belongs to the GTP cyclohydrolase I family. QueF type 2 subfamily. Homodimer.

The protein resides in the cytoplasm. It carries out the reaction 7-aminomethyl-7-carbaguanine + 2 NADP(+) = 7-cyano-7-deazaguanine + 2 NADPH + 3 H(+). Its pathway is tRNA modification; tRNA-queuosine biosynthesis. In terms of biological role, catalyzes the NADPH-dependent reduction of 7-cyano-7-deazaguanine (preQ0) to 7-aminomethyl-7-deazaguanine (preQ1). The sequence is that of NADPH-dependent 7-cyano-7-deazaguanine reductase from Legionella pneumophila (strain Paris).